We begin with the raw amino-acid sequence, 366 residues long: 4-hydroxy-3-methylbut-2-en-1-yl diphosphate synthase (flavodoxin) (366 aa).

Residues Cys-270, Cys-273, Cys-305, and Glu-312 each coordinate [4Fe-4S] cluster.

Belongs to the IspG family. [4Fe-4S] cluster is required as a cofactor.

The catalysed reaction is (2E)-4-hydroxy-3-methylbut-2-enyl diphosphate + oxidized [flavodoxin] + H2O + 2 H(+) = 2-C-methyl-D-erythritol 2,4-cyclic diphosphate + reduced [flavodoxin]. Its pathway is isoprenoid biosynthesis; isopentenyl diphosphate biosynthesis via DXP pathway; isopentenyl diphosphate from 1-deoxy-D-xylulose 5-phosphate: step 5/6. In terms of biological role, converts 2C-methyl-D-erythritol 2,4-cyclodiphosphate (ME-2,4cPP) into 1-hydroxy-2-methyl-2-(E)-butenyl 4-diphosphate. This Wigglesworthia glossinidia brevipalpis protein is 4-hydroxy-3-methylbut-2-en-1-yl diphosphate synthase (flavodoxin).